A 765-amino-acid polypeptide reads, in one-letter code: Dipeptidyl peptidase 4 (765 aa).

Residues 1–6 (MKTPWK) lie on the Cytoplasmic side of the membrane. A helical; Signal-anchor for type II membrane protein membrane pass occupies residues 7 to 29 (VLLGLLAIAALVTVITVPVVLLT). Over 30–765 (KGNDASTDSR…HFLKQCFSLL (736 aa)) the chain is Extracellular. N-linked (GlcNAc...) asparagine glycosylation is found at asparagine 84, asparagine 91, asparagine 149, asparagine 218, asparagine 228, asparagine 271, asparagine 280, asparagine 320, and asparagine 392. Cystine bridges form between cysteine 384–cysteine 393, cysteine 443–cysteine 446, and cysteine 453–cysteine 471. A glycan (N-linked (GlcNAc...) asparagine) is linked at asparagine 495. Residue serine 629 is the Charge relay system of the active site. Cysteine 648 and cysteine 761 are disulfide-bonded. An N-linked (GlcNAc...) asparagine glycan is attached at asparagine 684. Catalysis depends on charge relay system residues aspartate 707 and histidine 739.

Belongs to the peptidase S9B family. DPPIV subfamily. In terms of assembly, monomer. Homodimer. Heterodimer with Seprase (FAP). Requires homodimerization for optimal dipeptidyl peptidase activity and T-cell costimulation. Found in a membrane raft complex, at least composed of BCL10, CARD11, DPP4 and IKBKB. Associates with collagen. Interacts with PTPRC; the interaction is enhanced in an interleukin-12-dependent manner in activated lymphocytes. Interacts (via extracellular domain) with ADA; does not inhibit its dipeptidyl peptidase activity. Interacts with CAV1 (via the N-terminus); the interaction is direct. Interacts (via cytoplasmic tail) with CARD11 (via PDZ domain); its homodimerization is necessary for interaction with CARD11. Interacts with IGF2R; the interaction is direct. Interacts with GPC3. The soluble form (Dipeptidyl peptidase 4 soluble form also named SDPP) derives from the membrane form (Dipeptidyl peptidase 4 membrane form also named MDPP) by proteolytic processing. In terms of processing, N- and O-Glycosylated. Post-translationally, phosphorylated. Mannose 6-phosphate residues in the carbohydrate moiety are necessary for interaction with IGF2R in activated T-cells. Mannose 6-phosphorylation is induced during T-cell activation. As to expression, intestinal epithelium, dendritic cells and several immune system tissues.

Its subcellular location is the secreted. It is found in the cell membrane. It localises to the apical cell membrane. The protein resides in the cell projection. The protein localises to the invadopodium membrane. Its subcellular location is the lamellipodium membrane. It is found in the cell junction. It localises to the membrane raft. It catalyses the reaction Release of an N-terminal dipeptide, Xaa-Yaa-|-Zaa-, from a polypeptide, preferentially when Yaa is Pro, provided Zaa is neither Pro nor hydroxyproline.. Its activity is regulated as follows. Inhibited by GPC3 and diprotin A. Its function is as follows. Cell surface glycoprotein receptor involved in the costimulatory signal essential for T-cell receptor (TCR)-mediated T-cell activation. Acts as a positive regulator of T-cell coactivation, by binding at least ADA, CAV1, IGF2R, and PTPRC. Its binding to CAV1 and CARD11 induces T-cell proliferation and NF-kappa-B activation in a T-cell receptor/CD3-dependent manner. Its interaction with ADA also regulates lymphocyte-epithelial cell adhesion. In association with FAP is involved in the pericellular proteolysis of the extracellular matrix (ECM), the migration and invasion of endothelial cells into the ECM. May be involved in the promotion of lymphatic endothelial cells adhesion, migration and tube formation. When overexpressed, enhanced cell proliferation, a process inhibited by GPC3. Also acts as a serine exopeptidase with a dipeptidyl peptidase activity that regulates various physiological processes by cleaving peptides in the circulation, including many chemokines, mitogenic growth factors, neuropeptides and peptide hormones. Removes N-terminal dipeptides sequentially from polypeptides having unsubstituted N-termini provided that the penultimate residue is proline. This chain is Dipeptidyl peptidase 4 (DPP4), found in Bos taurus (Bovine).